We begin with the raw amino-acid sequence, 128 residues long: uncharacterized protein (128 aa).

3 helical membrane passes run 13 to 35, 42 to 64, and 90 to 112; these read FQMA…VFFV, IIAL…YNGG, and LVLT…SIIL.

The protein localises to the cell membrane. This is an uncharacterized protein from Methanocaldococcus jannaschii (strain ATCC 43067 / DSM 2661 / JAL-1 / JCM 10045 / NBRC 100440) (Methanococcus jannaschii).